The sequence spans 297 residues: Homoserine kinase (297 aa).

79-89 (PIARGLGSSGA) lines the ATP pocket.

Belongs to the GHMP kinase family. Homoserine kinase subfamily.

The protein localises to the cytoplasm. The catalysed reaction is L-homoserine + ATP = O-phospho-L-homoserine + ADP + H(+). It functions in the pathway amino-acid biosynthesis; L-threonine biosynthesis; L-threonine from L-aspartate: step 4/5. Catalyzes the ATP-dependent phosphorylation of L-homoserine to L-homoserine phosphate. The polypeptide is Homoserine kinase (Pyrobaculum aerophilum (strain ATCC 51768 / DSM 7523 / JCM 9630 / CIP 104966 / NBRC 100827 / IM2)).